Consider the following 314-residue polypeptide: Putative integrase/recombinase y4rB (314 aa).

Positions 2 to 79 constitute a Core-binding (CB) domain; it reads STFRQAVQEY…YVRVFARYRA (78 aa). The Tyr recombinase domain maps to 100–304; it reads ARPYLYSKED…SPELMKEAMR (205 aa). Active-site residues include Arg-147, Lys-172, His-248, Arg-251, and His-282. Tyr-291 serves as the catalytic O-(3'-phospho-DNA)-tyrosine intermediate.

This sequence belongs to the 'phage' integrase family.

The polypeptide is Putative integrase/recombinase y4rB (Sinorhizobium fredii (strain NBRC 101917 / NGR234)).